A 135-amino-acid polypeptide reads, in one-letter code: UPF0102 protein Mkms_2031 (135 aa).

The protein belongs to the UPF0102 family.

The protein is UPF0102 protein Mkms_2031 of Mycobacterium sp. (strain KMS).